The sequence spans 353 residues: Putative transcription factor MTF1 (353 aa).

Composition is skewed to polar residues over residues 11–26 and 36–58; these read VTRS…TSPA and EPSN…QQGN. Disordered regions lie at residues 11–96 and 129–174; these read VTRS…ALPC and FTTT…TTNP. Low complexity-rich tracts occupy residues 59-95 and 133-145; these read TEAS…PALP and NSSP…SPSS. Residues 148 to 164 show a composition bias toward basic residues; that stretch reads SHTRKNSKYTVRHHRTR. A compositionally biased stretch (polar residues) spans 165-174; it reads QSSFNGTTNP.

It localises to the nucleus. May be involved in transcriptional activation. The chain is Putative transcription factor MTF1 (MTF1) from Mucor circinelloides f. lusitanicus (Mucor racemosus var. lusitanicus).